The primary structure comprises 206 residues: Holliday junction branch migration complex subunit RuvA (206 aa).

The tract at residues 1–62 (MYDYLKGLIT…EDAQVLYGFP (62 aa)) is domain I. A domain II region spans residues 63 to 141 (NLDQRELFRK…SLLETIELPS (79 aa)). The tract at residues 142 to 152 (TEDELPLFGVH) is flexible linker. Residues 153–206 (PYKHELEEAILALAALGYSEKELEKIRPLLEDNDKLETTDAYMKQALQLLLKLK) form a domain III region.

Belongs to the RuvA family. As to quaternary structure, homotetramer. Forms an RuvA(8)-RuvB(12)-Holliday junction (HJ) complex. HJ DNA is sandwiched between 2 RuvA tetramers; dsDNA enters through RuvA and exits via RuvB. An RuvB hexamer assembles on each DNA strand where it exits the tetramer. Each RuvB hexamer is contacted by two RuvA subunits (via domain III) on 2 adjacent RuvB subunits; this complex drives branch migration. In the full resolvosome a probable DNA-RuvA(4)-RuvB(12)-RuvC(2) complex forms which resolves the HJ.

It localises to the cytoplasm. Functionally, the RuvA-RuvB-RuvC complex processes Holliday junction (HJ) DNA during genetic recombination and DNA repair, while the RuvA-RuvB complex plays an important role in the rescue of blocked DNA replication forks via replication fork reversal (RFR). RuvA specifically binds to HJ cruciform DNA, conferring on it an open structure. The RuvB hexamer acts as an ATP-dependent pump, pulling dsDNA into and through the RuvAB complex. HJ branch migration allows RuvC to scan DNA until it finds its consensus sequence, where it cleaves and resolves the cruciform DNA. The sequence is that of Holliday junction branch migration complex subunit RuvA from Lysinibacillus sphaericus (strain C3-41).